A 478-amino-acid polypeptide reads, in one-letter code: ATP synthase subunit beta (478 aa).

164-171 (GGAGVGKT) serves as a coordination point for ATP.

It belongs to the ATPase alpha/beta chains family. In terms of assembly, F-type ATPases have 2 components, CF(1) - the catalytic core - and CF(0) - the membrane proton channel. CF(1) has five subunits: alpha(3), beta(3), gamma(1), delta(1), epsilon(1). CF(0) has three main subunits: a(1), b(2) and c(9-12). The alpha and beta chains form an alternating ring which encloses part of the gamma chain. CF(1) is attached to CF(0) by a central stalk formed by the gamma and epsilon chains, while a peripheral stalk is formed by the delta and b chains.

The protein resides in the cell membrane. The enzyme catalyses ATP + H2O + 4 H(+)(in) = ADP + phosphate + 5 H(+)(out). Produces ATP from ADP in the presence of a proton gradient across the membrane. The catalytic sites are hosted primarily by the beta subunits. The sequence is that of ATP synthase subunit beta from Streptomyces coelicolor (strain ATCC BAA-471 / A3(2) / M145).